We begin with the raw amino-acid sequence, 121 residues long: Spermidine export protein MdtJ (121 aa).

A run of 4 helical transmembrane segments spans residues 1 to 21 (MYIYWILLGLAIATEITGTLS), 32 to 52 (GGFILMLVMISLSYIFLSFAV), 55 to 75 (IALGVAYALWEGIGILFITLF), and 82 to 102 (ESLSLMKIAGLTTLVAGIVLI).

Belongs to the drug/metabolite transporter (DMT) superfamily. Small multidrug resistance (SMR) (TC 2.A.7.1) family. MdtJ subfamily. Forms a complex with MdtI.

The protein resides in the cell inner membrane. In terms of biological role, catalyzes the excretion of spermidine. This is Spermidine export protein MdtJ from Escherichia coli O127:H6 (strain E2348/69 / EPEC).